Here is a 278-residue protein sequence, read N- to C-terminus: SPX domain-containing protein 2 (278 aa).

The region spanning 1-162 is the SPX domain; that stretch reads MKFGKSLSSQ…GSMIRLPFVQ (162 aa). Disordered regions lie at residues 191–242 and 255–278; these read PTNE…KSTV and GSST…EPGR.

In terms of assembly, interacts (via SPX domain) with PHR2 (via C-terminus). Interacts with RLI1 in the nucleus to prevents its positive regulation of leaf inclination during phosphate (Pi) starvation.

Its subcellular location is the nucleus. In terms of biological role, inhibits PHR2 DNA-binding activity via a phosphate (Pi)-dependent protein interaction. Together with SPX1, plays a negative role in the regulation of leaf inclination by preventing RLI1 transcription factor activity in Pi depleted conditions. This is SPX domain-containing protein 2 from Oryza sativa subsp. indica (Rice).